Consider the following 242-residue polypeptide: Probable transcriptional regulatory protein NMB1648 (242 aa).

This sequence belongs to the TACO1 family.

It is found in the cytoplasm. This Neisseria meningitidis serogroup B (strain ATCC BAA-335 / MC58) protein is Probable transcriptional regulatory protein NMB1648.